A 364-amino-acid polypeptide reads, in one-letter code: DNA replication and repair protein RecF (364 aa).

30–37 (GDNGAGKT) provides a ligand contact to ATP.

It belongs to the RecF family.

The protein resides in the cytoplasm. In terms of biological role, the RecF protein is involved in DNA metabolism; it is required for DNA replication and normal SOS inducibility. RecF binds preferentially to single-stranded, linear DNA. It also seems to bind ATP. This chain is DNA replication and repair protein RecF, found in Stenotrophomonas maltophilia (strain K279a).